A 343-amino-acid polypeptide reads, in one-letter code: Methylthioribose-1-phosphate isomerase (343 aa).

Substrate contacts are provided by residues 48 to 50 (RGA), Arg-88, and Gln-193. Asp-234 acts as the Proton donor in catalysis. Residue 244 to 245 (NK) coordinates substrate.

Belongs to the eIF-2B alpha/beta/delta subunits family. MtnA subfamily.

It carries out the reaction 5-(methylsulfanyl)-alpha-D-ribose 1-phosphate = 5-(methylsulfanyl)-D-ribulose 1-phosphate. Its pathway is amino-acid biosynthesis; L-methionine biosynthesis via salvage pathway; L-methionine from S-methyl-5-thio-alpha-D-ribose 1-phosphate: step 1/6. Functionally, catalyzes the interconversion of methylthioribose-1-phosphate (MTR-1-P) into methylthioribulose-1-phosphate (MTRu-1-P). This is Methylthioribose-1-phosphate isomerase from Thermotoga neapolitana (strain ATCC 49049 / DSM 4359 / NBRC 107923 / NS-E).